The chain runs to 529 residues: Cytochrome P450 monooxygenase okaD (529 aa).

The helical transmembrane segment at 13-35 (LPAQHLLASLALVGALLSVGYLL) threads the bilayer. C435 serves as a coordination point for heme.

The protein belongs to the cytochrome P450 family. Requires heme as cofactor.

The protein resides in the membrane. The enzyme catalyses okaramine C + 2 reduced [NADPH--hemoprotein reductase] + 2 O2 = okaramine A + 2 oxidized [NADPH--hemoprotein reductase] + 4 H2O + 2 H(+). It functions in the pathway alkaloid biosynthesis. Functionally, cytochrome P450 monooxygenase; part of the gene cluster that mediates the biosynthesis of okaramine B, a prenylated indole alkaloid that possesses an unusual octacyclic ring system, including a four-membered azetidine ring and an eight-membered azocine ring, and that exhibits insecticidal activity against silkworm larvae. Within the pathway, okaD likely catalyzes a key step in forming the eight-membered ring of okaramine A using as substrate okaramine C. The biosynthesis begins with the NRPS okaA that condenses two tryptophan molecules into cyclo(L-Trp-L-Trp). Prenylation by the prenyltransferase okaC then leads to the formation of cyclo(N8-(alpha,alpha-dimethylallyl)-L-Trp-6a-(alpha,alpha-dime-thylallyl)-L-Trp). This is followed by indole 2,3-epoxidation by the FAD-dependent monooxygenase okaB to facilitate the formation of the hexahydropyrrolo[2,3-b]indole (HPI) moiety of okaramine C. The cytochrome P450 monooxygenase okaD then likely catalyzes formation of the eight-membered ring of okaramine A. The dioxygenase okaE further forms the unusual 2-dimethyl-3-methyl-azetidine ring to yield 12-deshydroxyl okaramine E, as well as the hydroxylation of 12-deshydroxyl okaramine E to produce okaramine E. The cytochrome P450 monoxygenase okaG converts 12-deshydroxyl okaramine E into 3-desmethyl okaramine B which is further methylated by the methyltransferase okaF into okaramine B. In a shunt pathway, okaG and okaF together are also able to convert okaramine E into okaramine D. Okaramine H is produced by nonenzymatic conversion from okaramine A. The protein is Cytochrome P450 monooxygenase okaD of Penicillium ochrochloron.